We begin with the raw amino-acid sequence, 497 residues long: Glycerol kinase (497 aa).

Threonine 12 contributes to the ADP binding site. The ATP site is built by threonine 12, threonine 13, and serine 14. Threonine 12 serves as a coordination point for sn-glycerol 3-phosphate. ADP is bound at residue arginine 16. Sn-glycerol 3-phosphate-binding residues include arginine 82, glutamate 83, tyrosine 134, and aspartate 243. 5 residues coordinate glycerol: arginine 82, glutamate 83, tyrosine 134, aspartate 243, and glutamine 244. 2 residues coordinate ADP: threonine 265 and glycine 308. ATP contacts are provided by threonine 265, glycine 308, glutamine 312, and glycine 409. The ADP site is built by glycine 409 and asparagine 413.

This sequence belongs to the FGGY kinase family.

The enzyme catalyses glycerol + ATP = sn-glycerol 3-phosphate + ADP + H(+). Its pathway is polyol metabolism; glycerol degradation via glycerol kinase pathway; sn-glycerol 3-phosphate from glycerol: step 1/1. Its activity is regulated as follows. Inhibited by fructose 1,6-bisphosphate (FBP). Functionally, key enzyme in the regulation of glycerol uptake and metabolism. Catalyzes the phosphorylation of glycerol to yield sn-glycerol 3-phosphate. This Nitratidesulfovibrio vulgaris (strain DSM 19637 / Miyazaki F) (Desulfovibrio vulgaris) protein is Glycerol kinase.